The sequence spans 189 residues: GTPase KRas (189 aa).

Residue Met-1 is modified to N-acetylmethionine; in GTPase KRas; alternate. Thr-2 is subject to N-acetylthreonine; in GTPase KRas, N-terminally processed. GTP is bound by residues 10–18 (GAGGVGKSA), 29–35 (VDEYDPT), and 59–60 (AG). The short motif at 32–40 (YDPTIEDSY) is the Effector region element. A (Microbial infection) O-linked (Glc) threonine; by P.sordellii toxin TcsL glycan is attached at Thr-35. N6-acetyllysine is present on Lys-104. Position 116–119 (116–119 (NKCD)) interacts with GTP. The interval 166 to 185 (YRLKKISKEEKTPGCVKIKK) is hypervariable region. Residue Lys-170 forms a Glycyl lysine isopeptide (Lys-Gly) (interchain with G-Cter in ubiquitin) linkage. Residue Cys-180 is the site of S-palmitoyl cysteine attachment. N6-palmitoyl lysine attachment occurs at residues Lys-182, Lys-184, and Lys-185. Position 186 is a cysteine methyl ester (Cys-186). Cys-186 carries S-farnesyl cysteine lipidation. Positions 187–189 (IIM) are cleaved as a propeptide — removed in mature form.

It belongs to the small GTPase superfamily. Ras family. In terms of assembly, interacts with PHLPP. Interacts (active GTP-bound form preferentially) with RGS14. Interacts (when farnesylated) with PDE6D; this promotes dissociation from the cell membrane. Interacts with SOS1. Interacts (when farnesylated) with GPR31. Interacts with RAP1GDS1. Interacts (active GTP-bound form) with both SHOC2 and PP1c (all isoforms) to form a tertiary complex; SHOC2 and PP1c preferably bind M-Ras/MRAS, but they also bind K-Ras/KRAS, N-Ras/NRAS and H-Ras/HRAS. Interacts (GTP-bound form) with MAPKAP1/SIN1; inhibiting K-Ras/KRAS activity. Interacts with GPR31; in a farnelysation-dependent manner. In terms of processing, acetylation at Lys-104 prevents interaction with guanine nucleotide exchange factors (GEFs). Post-translationally, palmitoylated at Lys-182, Lys-184 and Lys-185. Palmitoylation on lysine residues is promoted by palmitoylation at Cys-180. Lysine-depalmitoylation by SIRT2 promotes its localization to endomembranes in endocytic pathways. Ubiquitinated by the BCR(LZTR1) E3 ubiquitin ligase complex at Lys-170 in a non-degradative manner, leading to inhibit Ras signaling by decreasing Ras association with membranes. In terms of processing, (Microbial infection) Glucosylated at Thr-35 by P.sordellii toxin TcsL.

The protein localises to the cell membrane. Its subcellular location is the endomembrane system. It localises to the cytoplasm. It is found in the cytosol. It carries out the reaction GTP + H2O = GDP + phosphate + H(+). With respect to regulation, alternates between an inactive form bound to GDP and an active form bound to GTP. Activated by a guanine nucleotide-exchange factor (GEF) and inactivated by a GTPase-activating protein (GAP). Interaction with SOS1 promotes exchange of bound GDP to GTP. Ras proteins bind GDP/GTP and possess intrinsic GTPase activity. Plays an important role in the regulation of cell proliferation. Plays a role in promoting oncogenic events by inducing transcriptional silencing of tumor suppressor genes (TSGs) in colorectal cancer (CRC) cells in a ZNF304-dependent manner. This chain is GTPase KRas (KRAS), found in Homo sapiens (Human).